A 788-amino-acid polypeptide reads, in one-letter code: METLLGGLLAFGMAFAVVDACPKYCVCQNLSESLGTLCPSKGLLFVPPDIDRRTVELRLGGNFIIHIGRQDFANMTGLVDLTLSRNTISHIQPFSFLDLESLRSLHLDSNRLPSLGEDTLRGLVNLQHLIVNNNQLGGIADDAFEDFLLTLEDLDLSYNNLHGLPWDSVRRMVNLHQLSLDHNLLDHIAEGTFADLQKLARLDLTSNRLQKLPPDPIFARSQASLLTATPFAPPLSFSFGGNPLHCNCELLWLRRLERDDDLETCGSPGSLKGRYFWHIREEEFVCEPPLITQHTHKLLVLEGQAATLKCKAIGDPSPLIHWVAPDDRLVGNSSRTAVYDNGTLDILITTSQDSGPFTCIAANAAGEATATVEVSIVQLPHLSNSTSRMAPPKSRLSDITGSSKTSRGGGGSGAGEPPKSTPERAVLVSDVTTTSALVKWSVSKSAPRVKMYQLQYNCSDDEVLIYRMIPASNKAFVVNNLVSGTGYDLCVLAMWDDTATTLTATNIVGCAQFFTKADYPQCQSMHSQILGGTMILVIGGIIVATLLVFIVILMVRYKVCNHDTPGKMAAATVSNVYSQTNGSQPPPLGGIPVGQLPQAPPKVVVRNELMDFSTSLARACDSSSSSSLGSGEAAGLGRGPWRLPPPAPRPKPSLDRLMGAFASLDLKSQRKEELLDSRTPAGRGAGTSSRGHHSDREPLLGPPATRARSLLPLPLEGKAKRSHSFDMGDFAAAAAAVPGGYSPPRRVSNIWTKRSLSVNGMLLPFEESDLVGARGTFGSSEWVMESTV.

Residues 1 to 20 (METLLGGLLAFGMAFAVVDA) form the signal peptide. In terms of domain architecture, LRRNT spans 21-52 (CPKYCVCQNLSESLGTLCPSKGLLFVPPDIDR). Residues 21-534 (CPKYCVCQNL…MHSQILGGTM (514 aa)) are Extracellular-facing. Asn-29 is a glycosylation site (N-linked (GlcNAc...) asparagine). LRR repeat units lie at residues 53–74 (RTVE…DFAN), 77–98 (GLVD…SFLD), 101–122 (SLRS…TLRG), 125–146 (NLQH…AFED), 150–171 (TLED…SVRR), 174–195 (NLHQ…TFAD), and 198–219 (KLAR…PIFA). The LRRCT domain occupies 242–288 (NPLHCNCELLWLRRLERDDDLETCGSPGSLKGRYFWHIREEEFVCEP). Residues 289–375 (PLITQHTHKL…GEATATVEVS (87 aa)) enclose the Ig-like domain. The cysteines at positions 310 and 359 are disulfide-linked. 3 N-linked (GlcNAc...) asparagine glycosylation sites follow: Asn-332, Asn-341, and Asn-384. The tract at residues 383–423 (SNSTSRMAPPKSRLSDITGSSKTSRGGGGSGAGEPPKSTPE) is disordered. In terms of domain architecture, Fibronectin type-III spans 422–518 (PERAVLVSDV…GCAQFFTKAD (97 aa)). Residues 535 to 555 (ILVIGGIIVATLLVFIVILMV) form a helical membrane-spanning segment. The Cytoplasmic segment spans residues 556–788 (RYKVCNHDTP…SSEWVMESTV (233 aa)). Low complexity predominate over residues 620–631 (CDSSSSSSLGSG). Disordered stretches follow at residues 620–655 (CDSS…PSLD) and 668–711 (SQRK…RSLL). A compositionally biased stretch (pro residues) spans 642 to 651 (RLPPPAPRPK). The PDZ-binding signature appears at 785 to 788 (ESTV).

This sequence belongs to the LRFN family. As to quaternary structure, forms heteromeric complexes with LRFN1, LRFN3, LRFN4 and LRFN5. Can form homomeric complexes, but not across cell junctions. Interacts with DLG4. Directly interacts with DLG1, DLG2 and DLG3. Directly interacts with 2 NMDA receptor subunits GRIN1 and GRIN2A. Glycosylated. As to expression, predominantly expressed in the brain, with a weak, but broad expression in the cerebral cortex and diencephalic nuclei. Strongly expressed in both the pyramidal layer and the dentate gyrus of the hippocampus. Also detected in other parts of the central nervous system, including the olfactory bulb, pons, cerebellum, and medulla oblongata, as well as in the peripheral nervous system, such as the ganglia of cranial nerves and the dorsal root ganglion during gestation.

It is found in the membrane. The protein resides in the synapse. Its subcellular location is the postsynaptic cell membrane. In terms of biological role, promotes neurite outgrowth in hippocampal neurons. Enhances the cell surface expression of 2 NMDA receptor subunits GRIN1 and GRIN2A. May play a role in redistributing DLG4 to the cell periphery. The sequence is that of Leucine-rich repeat and fibronectin type-III domain-containing protein 2 (Lrfn2) from Mus musculus (Mouse).